A 230-amino-acid chain; its full sequence is Response regulator MprA (230 aa).

Residues 4 to 118 (RILVVDDDRA…ELLARMRALL (115 aa)) form the Response regulatory domain. Asp48 is modified (4-aspartylphosphate). The segment at residues 129–227 (SMAMRFSDLT…VRGVGYVLRE (99 aa)) is a DNA-binding region (ompR/PhoB-type).

As to quaternary structure, monomer. Interaction with each conserved 8-bp repeat requires tandem binding by two protein monomers. In terms of processing, phosphorylated and dephosphorylated by MprB.

The protein localises to the cytoplasm. In terms of biological role, member of the two-component regulatory system MprB/MprA which contributes to maintaining a balance among several systems involved in stress resistance and is required for establishment and maintenance of persistent infection in the host. Functions as a transcriptional regulator that recognizes a 19-bp nucleotide motif comprizing two loosely conserved 8-bp direct DNA-binding motif repeats separated by a 3-bp spacer region. MprB/MprA up-regulates expression of mprA and pepD. In Mycobacterium bovis (strain ATCC BAA-935 / AF2122/97), this protein is Response regulator MprA (mprA).